Reading from the N-terminus, the 339-residue chain is Chromo domain-containing protein cec-3 (339 aa).

Residues 1–21 (MSNEGSREESREPEAREGKSD) are disordered. The 61-residue stretch at 24–84 (FEVEKILAHK…KLKVTDKTEL (61 aa)) folds into the Chromo domain. Over residues 91–105 (QIKKNKSQKSKKRSK) the composition is skewed to basic residues. Disordered stretches follow at residues 91-199 (QIKK…APLS) and 215-272 (EEKA…QRTL). Composition is skewed to basic and acidic residues over residues 106 to 117 (TVSDHESNHDSD) and 171 to 183 (AAME…RNWL). A compositionally biased stretch (acidic residues) spans 184 to 193 (DEESSDDEAE). The segment covering 230–241 (KPREVVIKKDPS) has biased composition (basic and acidic residues). The span at 242 to 251 (ESPVASASSV) shows a compositional bias: low complexity.

As to expression, expressed in every cell of the embryo (at protein level). In adults, expressed predominantly in the head region and the germline.

It is found in the chromosome. Its subcellular location is the nucleus. In terms of biological role, specifically recognizes and binds methylated 'Lys-9' of histone H3 (H3K9me), with highest preference for trimethylated 'Lys-9' (H3K9me3) followed by dimethylated 'Lys-9' (H3K9me2) followed by monomethylated 'Lys-9' (H3K9me1). Plays a role in maintaining correct unc-4 expression in the VC motor neurons where unc-4 is expressed in the vulval but not in the non-vulval VC neurons. In Caenorhabditis elegans, this protein is Chromo domain-containing protein cec-3 (cec-3).